A 203-amino-acid polypeptide reads, in one-letter code: Guanylate kinase (203 aa).

In terms of domain architecture, Guanylate kinase-like spans 3-181; sequence GTLYIVSAPS…ALDDLKAIFR (179 aa). 10–17 contributes to the ATP binding site; the sequence is APSGAGKT.

Belongs to the guanylate kinase family.

It localises to the cytoplasm. It catalyses the reaction GMP + ATP = GDP + ADP. Essential for recycling GMP and indirectly, cGMP. The sequence is that of Guanylate kinase (gmk) from Pseudomonas aeruginosa (strain ATCC 15692 / DSM 22644 / CIP 104116 / JCM 14847 / LMG 12228 / 1C / PRS 101 / PAO1).